A 64-amino-acid polypeptide reads, in one-letter code: MILYLLFAFLFLAFLSEPGNAYKQCHKKGGHCFPKEKICIPPSSDFGKMDCRWRWKCCKKGSGK.

An N-terminal signal peptide occupies residues 1–22 (MILYLLFAFLFLAFLSEPGNAY). 3 cysteine pairs are disulfide-bonded: Cys-25–Cys-57, Cys-32–Cys-51, and Cys-39–Cys-58.

It belongs to the crotamine-myotoxin family. As to quaternary structure, monomer. Expressed by the venom gland.

It localises to the secreted. Cationic peptide that possesses multiple functions. It acts as a cell-penetrating peptide (CPP), and as a potent voltage-gated potassium channel (Kv) inhibitor. It exhibits antimicrobial activities, hind limb paralysis, and severe muscle necrosis by a non-enzymatic mechanism. The polypeptide is Crotamine CRO3 (CRO3) (Crotalus durissus terrificus (South American rattlesnake)).